The sequence spans 309 residues: Homoserine kinase (309 aa).

ATP is bound at residue 91 to 101; sequence PIGSGLGSSAC.

The protein belongs to the GHMP kinase family. Homoserine kinase subfamily.

The protein resides in the cytoplasm. The enzyme catalyses L-homoserine + ATP = O-phospho-L-homoserine + ADP + H(+). The protein operates within amino-acid biosynthesis; L-threonine biosynthesis; L-threonine from L-aspartate: step 4/5. Functionally, catalyzes the ATP-dependent phosphorylation of L-homoserine to L-homoserine phosphate. This is Homoserine kinase from Salmonella agona (strain SL483).